We begin with the raw amino-acid sequence, 133 residues long: uncharacterized protein (133 aa).

In terms of domain architecture, Response regulatory spans 9-128; that stretch reads RILVYSDNVQ…VLGRTVLSLL (120 aa). Position 64 is a 4-aspartylphosphate (aspartate 64).

This is an uncharacterized protein from Mycobacterium tuberculosis (strain CDC 1551 / Oshkosh).